A 23-amino-acid polypeptide reads, in one-letter code: Magainin-BM2 (23 aa).

As to expression, expressed by the skin glands.

Its subcellular location is the secreted. Its function is as follows. Antimicrobial peptide. The protein is Magainin-BM2 of Xenopus boumbaensis (Mawa clawed frog).